The following is a 1454-amino-acid chain: MESSSSDYYNKDNEEESLLANVASLRHELKITEWSLQSLGEELSSVSPSENSDYAPNPSRSEKLILDVQPSHPGLLNYSPYENVCKISGSSTDFQKKPRDKMFSSSAPVDQEIKSLREKLNKLRQQNACLVTQNHSLMTKFESIHFELTQSRAKVSMLESAQQQAASVPILEEQIINLEAEVSAQDKVLREAENKLEQSQKMVIEKEQSLQESKEECIKLKVDLLEQTKQGKRAERQRNEALYNAEELSKAFQQYKKKVAEKLEKVQAEEEILERNLTNCEKENKRLQERCGLYKSELEILKEKLRQLKEENNNGKEKLRIMAVKNSEVMAQLTESRQSILKLESELENKDEILRDKFSLMNENRELKVRVAAQNERLDLCQQEIESSRVELRSLEKIISQLPLKRELFGFKSYLSKYQMSSFSNKEDRCIGCCEANKLVISELRIKLAIKEAEIQKLHANLTANQLSQSLITCNDSQESSKLSSLETEPVKLGGHQVESVKDQNQHTMNKQYEKERQRLVTGIEELRTKLIQIEAENSDLKVNMAHRTSQFQLIQEELLEKASNSSKLESEMTKKCSQLLTLEKQLEEKIVAYSSIAAKNAELEQELMEKNEKIRSLETNINTEHEKICLAFEKAKKIHLEQHKEMEKQIERLEAQLEKKDQQFKEQEKTMSMLQQDIICKQHHLESLDRLLTESKGEMKKENMKKDEALKALQNQVSEETIKVRQLDSALEICKEELVLHLNQLEGNKEKFEKQLKKKSEEVYCLQKELKIKNHSLQETSEQNVILQHTLQQQQQMLQQETIRNGELEDTQTKLEKQVSKLEQELQKQRESSAEKLRKMEEKCESAAHEADLKRQKVIELTGTARQVKIEMDQYKEELSKMEKEIMHLKRDGENKAMHLSQLDMILDQTKTELEKKTNAVKELEKLQHSTETELTEALQKREVLETELQNAHGELKSTLRQLQELRDVLQKAQLSLEEKYTTIKDLTAELRECKMEIEDKKQELLEMDQALKERNWELKQRAAQVTHLDMTIREHRGEMEQKIIKLEGTLEKSELELKECNKQIESLNDKLQNAKEQLREKEFIMLQNEQEISQLKKEIERTQQRMKEMESVMKEQEQYIATQYKEAIDLGQELRLTREQVQNSHTELAEARHQQVQAQREIERLSSELEDMKQLSKEKDAHGNHLAEELGASKVREAHLEARMQAEIKKLSAEVESLKEAYHMEMISHQENHAKWKISADSQKSSVQQLNEQLEKAKLELEEAQDTVSNLHQQVQDRNEVIEAANEALLTKESELTRLQAKISGHEKAEDIKFLPAPFTSPTEIMPDVQDPKFAKCFHTSFSKCTKLRRSISASDLTFKIHGDEDLSEELLQDLKKMQLEQPSTLEESHKNLTYTQPDSFKPLTYNLEADSSENNDFNTLSGMLRYINKEVRLLKKSSMQTGAGLNQGENV.

Serine 45 carries the phosphoserine modification. 4 coiled-coil regions span residues 107–138 (APVD…HSLM), 170–402 (ILEE…ISQL), 438–464 (KLVI…NLTA), and 508–1309 (TMNK…SGHE). Residues 828–851 (QKQRESSAEKLRKMEEKCESAAHE) form a disordered region. Serine 1355 is modified (phosphoserine).

Its subcellular location is the cytoplasm. The protein localises to the cytoskeleton. It localises to the microtubule organizing center. It is found in the centrosome. The protein resides in the centriolar satellite. This Homo sapiens (Human) protein is Coiled-coil domain-containing protein 18 (CCDC18).